We begin with the raw amino-acid sequence, 273 residues long: Homeobox protein HMX2 (273 aa).

The disordered stretch occupies residues 1 to 154 (MGSKEDVGKG…TGAAKKKTRT (154 aa)). Residues 114–123 (PDFKEEKERL) are compositionally biased toward basic and acidic residues. Positions 149-208 (KKKTRTVFSRSQVYQLESTFDMKRYLSSSERACLASSLQLTETQVKTWFQNRRNKWKRQL) form a DNA-binding region, homeobox.

The protein belongs to the HMX homeobox family. As to expression, expressed in the developing CNS, including a specific expression in vestibular structures throughout inner ear development.

It localises to the nucleus. Functionally, transcription factor involved in specification of neuronal cell types and which is required for inner ear and hypothalamus development. In Mus musculus (Mouse), this protein is Homeobox protein HMX2 (Hmx2).